The primary structure comprises 501 residues: Pentatricopeptide repeat-containing protein At4g16470 (501 aa).

PPR repeat units follow at residues 107–141 (EPET…GFAL), 142–172 (NEYL…LKIR), 173–207 (DLIP…RIVP), 208–242 (DQYT…CIKS), 243–273 (NIIV…LSTR), 274–308 (NVIT…GCRP), 309–344 (NPVT…GIEP), and 345–379 (EGQH…EHPP). Positions 380–455 (VWGSLLGACR…DPGYSQIELQ (76 aa)) are type E motif. The interval 456 to 486 (GEVHRFMKDDTSHRLSEKIYKKVHEMTSFFM) is type E(+) motif.

It belongs to the PPR family. PCMP-E subfamily.

The polypeptide is Pentatricopeptide repeat-containing protein At4g16470 (PCMP-E12) (Arabidopsis thaliana (Mouse-ear cress)).